The following is a 479-amino-acid chain: MTTRCVMVLGTTSGAGKSWLTAALCRWYARQGLKVAPFKAQNMSNNARVVGGGEIGSAQYFQALAARAVPDVRMNPLLLKPERDTHSQVVLMGQVSAELTAMPWRGRSERVWPQIAQALDALRAENDVVVIEGAGSPAEINLMASDIVNLRVARHADARCLLVTDIDRGGAFAHLYGTWALMPESDRALLRGFVLNKFRGDASLLAPAPQQLQALTGIATVATLPMWREHGLPEEDGVFDDRSHASGAVTRTVAVVAYPRISNLDEFQPLKNVPGVRLAWARTPAELAGADWIVLPGSKHTSGDLAWLRAQGLDRAIAAHAARGGAVLGVCGGLQMLGEALVDPHGIDGNAPGLGLLPLVTVFEREKTVRHRAAVFGQLGGAWASLSNVPVAGYEIHHGQTAIHPQMAQDGHAVMPEGLAWQNARGNVLGLYLHGLFEDAAALHALFGAAAPTLDATFDGLADFIDNHFEAGVLQGLIA.

The GATase cobBQ-type domain occupies threonine 250–alanine 442. Cysteine 331 (nucleophile) is an active-site residue. Histidine 434 is an active-site residue.

It belongs to the CobB/CobQ family. CobQ subfamily.

The protein operates within cofactor biosynthesis; adenosylcobalamin biosynthesis. Functionally, catalyzes amidations at positions B, D, E, and G on adenosylcobyrinic A,C-diamide. NH(2) groups are provided by glutamine, and one molecule of ATP is hydrogenolyzed for each amidation. The sequence is that of Cobyric acid synthase from Variovorax paradoxus (strain S110).